Consider the following 252-residue polypeptide: 2-succinyl-6-hydroxy-2,4-cyclohexadiene-1-carboxylate synthase (252 aa).

It belongs to the AB hydrolase superfamily. MenH family. In terms of assembly, monomer.

It carries out the reaction 5-enolpyruvoyl-6-hydroxy-2-succinyl-cyclohex-3-ene-1-carboxylate = (1R,6R)-6-hydroxy-2-succinyl-cyclohexa-2,4-diene-1-carboxylate + pyruvate. It participates in quinol/quinone metabolism; 1,4-dihydroxy-2-naphthoate biosynthesis; 1,4-dihydroxy-2-naphthoate from chorismate: step 3/7. The protein operates within quinol/quinone metabolism; menaquinone biosynthesis. Catalyzes a proton abstraction reaction that results in 2,5-elimination of pyruvate from 2-succinyl-5-enolpyruvyl-6-hydroxy-3-cyclohexene-1-carboxylate (SEPHCHC) and the formation of 2-succinyl-6-hydroxy-2,4-cyclohexadiene-1-carboxylate (SHCHC). This is 2-succinyl-6-hydroxy-2,4-cyclohexadiene-1-carboxylate synthase from Escherichia coli (strain SE11).